Consider the following 350-residue polypeptide: Protein-glutamate methylesterase/protein-glutamine glutaminase 2 (350 aa).

A Response regulatory domain is found at 3-121 (RVLLVDDSPV…DPDYEEAVSE (119 aa)). Asp54 carries the post-translational modification 4-aspartylphosphate. Residues 158-322 (IHQDIRVIVI…SFVYGMPGAA (165 aa)) form the CheB-type methylesterase domain. Residues Ser170, His197, and Asp290 contribute to the active site.

It belongs to the CheB family. Post-translationally, phosphorylated by CheA. Phosphorylation of the N-terminal regulatory domain activates the methylesterase activity.

Its subcellular location is the cytoplasm. The enzyme catalyses [protein]-L-glutamate 5-O-methyl ester + H2O = L-glutamyl-[protein] + methanol + H(+). It carries out the reaction L-glutaminyl-[protein] + H2O = L-glutamyl-[protein] + NH4(+). Its function is as follows. Involved in chemotaxis. Part of a chemotaxis signal transduction system that modulates chemotaxis in response to various stimuli. Catalyzes the demethylation of specific methylglutamate residues introduced into the chemoreceptors (methyl-accepting chemotaxis proteins or MCP) by CheR. Also mediates the irreversible deamidation of specific glutamine residues to glutamic acid. The sequence is that of Protein-glutamate methylesterase/protein-glutamine glutaminase 2 from Methanospirillum hungatei JF-1 (strain ATCC 27890 / DSM 864 / NBRC 100397 / JF-1).